A 758-amino-acid chain; its full sequence is Matrix metalloproteinase-2 (758 aa).

An N-terminal signal peptide occupies residues 1–17 (MFSKYVLATLLALFAQS). His257 provides a ligand contact to Zn(2+). The active site involves Glu258. Residues His261 and His267 each contribute to the Zn(2+) site. Residues 335-514 (AYWPWNNPSN…HNKPRKPKPD (180 aa)) are disordered. Positions 338-348 (PWNNPSNNPNN) are enriched in low complexity. Over residues 349 to 476 (DRNRARERQE…EWERRNRNGA (128 aa)) the composition is skewed to basic and acidic residues. Residues 479-494 (PVTPTANTTPRPTNKP) are compositionally biased toward low complexity. Over residues 499-510 (HRQHHHHNKPRK) the composition is skewed to basic residues. Hemopexin repeat units follow at residues 513 to 561 (PDSC…WSAL), 565 to 610 (LTKV…GLPP), 612 to 659 (LTHI…WSGV), and 660 to 707 (GYNI…WMQC). Cysteines 516 and 707 form a disulfide. A helical transmembrane segment spans residues 739 to 756 (LRINHFILSILLLAIANW). The Cytoplasmic segment spans residues 757 to 758 (RS).

The protein belongs to the peptidase M10A family. Ca(2+) serves as cofactor. The cofactor is Zn(2+). As to expression, widely expressed during embryogenesis including in the mesoderm, developing gut, central and peripheral nervous systems and imaginal disks. In the embryonic nervous system, expressed in neurons and glia. In third instar larvae, strongly expressed in the morphogenetic furrow of eye imaginal disks and in the optic lobe region of the brain. Expressed in posterior follicle cells in all mature stage 14 follicles but not in earlier follicles and is also expressed in some anterior follicle cells that help form dorsal eggshell structures.

It is found in the cell membrane. Its function is as follows. Has metalloproteinase activity. Proteolytically cleaves the PGRP-LC receptor; involved in gut-fat body innate immunological communication (GFIC)-mediated activation of the imd/Relish signal transduction pathway. Required for larval tissue histolysis during metamorphosis and is involved in pupal head eversion and fusion of the wing imaginal tissue. Required for growth of the dorsal air sac primordium and development of the dorsal air sacs. Promotes embryonic motor axon fasciculation. Cleaves and activates frac to promote motor axon bundling during outgrowth. Promotes the reshaping of adult sensory neuron dendrites from a radial to lattice-like shape which occurs after eclosion by degrading the basement membrane on which the dendrites grow. Involved in inhibition of follicle stem cell proliferation by cleaving Dlp, inhibiting its interaction with wg and preventing Dlp-mediated spreading of wg to follicle stem cells to enhance their proliferation. Plays a role in wound healing. Involved in fat body dissociation which occurs during metamorphosis by degrading basement membrane components, leading to destruction of cell-basement membrane junctions. Required for posterior follicle cell degradation and ovulation. The chain is Matrix metalloproteinase-2 from Drosophila melanogaster (Fruit fly).